The sequence spans 238 residues: Testis-specific gene A8 protein (238 aa).

The tract at residues 35-238 (GKGAKTNKRG…GEAVATTTMT (204 aa)) is disordered. Over residues 39–48 (KTNKRGKRGG) the composition is skewed to basic residues. Tandem repeats lie at residues 79 to 93 (AAAAAPEAAASPESS), 94 to 108 (AAAAAPEAAASPESS), 109 to 123 (AAAAAPEAAASPESS), 124 to 138 (AAAAAPEAAASLESS), 153 to 158 (PAAPEA), 171 to 176 (PAAPEA), 180 to 185 (PAAPEA), and 189 to 194 (PAAPEA). The tract at residues 79–148 (AAAAAPEAAA…AAAAAPEAAA (70 aa)) is 4 X 15 AA tandem repeats of A-A-A-A-A-P-E-A-A-A-S-[PL]-E-S-S. Composition is skewed to low complexity over residues 79–200 (AAAA…AAPA) and 208–220 (WEAAAVVGEAAVK). The interval 153-194 (PAAPEAAAAPEVAAAPATPAAPEATAAPAAPEAATTPAAPEA) is 4 X 6 AA repeats of P-A-A-P-E-A.

In terms of tissue distribution, specifically expressed in testis (at protein level).

It localises to the cytoplasm. The protein localises to the nucleus. The protein resides in the nucleoplasm. The protein is Testis-specific gene A8 protein of Mus musculus (Mouse).